Reading from the N-terminus, the 316-residue chain is BTB/POZ domain-containing adapter for CUL3-mediated RhoA degradation protein 2 (316 aa).

In terms of domain architecture, BTB spans 28–96 (KYVQLNVGGS…LRDDTITLPQ (69 aa)). Polar residues predominate over residues 268-279 (EATSRSRSQASP). The interval 268 to 287 (EATSRSRSQASPSEDEETFE) is disordered. Ser-278 is subject to Phosphoserine. Phosphoserine; by CK2 is present on Ser-280.

This sequence belongs to the BACURD family. As to quaternary structure, component of the BCR(TNFAIP1) E3 ubiquitin ligase complex, at least composed of CUL3, TNFAIP1/BACURD2 and RBX1. Interacts with RHOA; with a preference for RhoA-GDP. Interacts with RHOB. Interacts with PCNA. Interacts with CSNK2B. In terms of processing, phosphorylation at Ser-280 by CK2 facilitates the nucleus localization and increases interaction with PCNA.

The protein resides in the cytoplasm. It is found in the nucleus. The protein localises to the endosome. The protein operates within protein modification; protein ubiquitination. Its function is as follows. Substrate-specific adapter of a BCR (BTB-CUL3-RBX1) E3 ubiquitin-protein ligase complex involved in regulation of cytoskeleton structure. The BCR(TNFAIP1) E3 ubiquitin ligase complex mediates the ubiquitination of RHOA, leading to its degradation by the proteasome, thereby regulating the actin cytoskeleton and cell migration. Its interaction with RHOB may regulate apoptosis. May enhance the PCNA-dependent DNA polymerase delta activity. The polypeptide is BTB/POZ domain-containing adapter for CUL3-mediated RhoA degradation protein 2 (TNFAIP1) (Homo sapiens (Human)).